Consider the following 370-residue polypeptide: Protein DUF642 L-GALACTONO-1,4-LACTONE-RESPONSIVE GENE 1 (370 aa).

An N-terminal signal peptide occupies residues 1-22; the sequence is MMYQEAALLLALLFISSNVVLS. Asn124 carries an N-linked (GlcNAc...) asparagine glycan.

As to expression, expressed at low levels in roots, seedlings and leaves.

Its subcellular location is the secreted. The protein resides in the cell wall. In Arabidopsis thaliana (Mouse-ear cress), this protein is Protein DUF642 L-GALACTONO-1,4-LACTONE-RESPONSIVE GENE 1.